Reading from the N-terminus, the 413-residue chain is Tyrosine--tRNA ligase (413 aa).

Position 34 (tyrosine 34) interacts with L-tyrosine. The 'HIGH' region motif lies at 39–48 (PTSHSLTVGH). 2 residues coordinate L-tyrosine: tyrosine 164 and glutamine 168. The 'KMSKS' region signature appears at 225–229 (KFGKS). Lysine 228 contributes to the ATP binding site. In terms of domain architecture, S4 RNA-binding spans 347–413 (ILLVDALVQT…GKKNNALIVF (67 aa)).

This sequence belongs to the class-I aminoacyl-tRNA synthetase family. TyrS type 1 subfamily. Homodimer.

It localises to the cytoplasm. The catalysed reaction is tRNA(Tyr) + L-tyrosine + ATP = L-tyrosyl-tRNA(Tyr) + AMP + diphosphate + H(+). Catalyzes the attachment of tyrosine to tRNA(Tyr) in a two-step reaction: tyrosine is first activated by ATP to form Tyr-AMP and then transferred to the acceptor end of tRNA(Tyr). This chain is Tyrosine--tRNA ligase, found in Onion yellows phytoplasma (strain OY-M).